The sequence spans 513 residues: ATP synthase subunit alpha 2 (513 aa).

152-159 (GDSKTGKT) provides a ligand contact to ATP.

The protein belongs to the ATPase alpha/beta chains family. F-type ATPases have 2 components, CF(1) - the catalytic core - and CF(0) - the membrane proton channel. CF(1) has five subunits: alpha(3), beta(3), gamma(1), delta(1), epsilon(1). CF(0) has three main subunits: a(1), b(2) and c(9-12). The alpha and beta chains form an alternating ring which encloses part of the gamma chain. CF(1) is attached to CF(0) by a central stalk formed by the gamma and epsilon chains, while a peripheral stalk is formed by the delta and b chains.

Its subcellular location is the cell membrane. The enzyme catalyses ATP + H2O + 4 H(+)(in) = ADP + phosphate + 5 H(+)(out). Functionally, produces ATP from ADP in the presence of a proton gradient across the membrane. The alpha chain is a regulatory subunit. This Mycoplasmopsis pulmonis (strain UAB CTIP) (Mycoplasma pulmonis) protein is ATP synthase subunit alpha 2.